We begin with the raw amino-acid sequence, 134 residues long: Acyl carrier protein, chloroplastic (134 aa).

The N-terminal 51 residues, 1-51 (MATTFSASVSTLATSLATPTRISFQKPALVSRTNLSFNLRRSIPTRLSVSC), are a transit peptide targeting the chloroplast. Residues 55 to 130 (PETIEKVSKI…EAAELIEELV (76 aa)) enclose the Carrier domain. The residue at position 90 (serine 90) is an O-(pantetheine 4'-phosphoryl)serine.

The protein belongs to the acyl carrier protein (ACP) family. In terms of processing, 4'-phosphopantetheine is transferred from CoA to a specific serine of apo-ACP by acpS. This modification is essential for activity because fatty acids are bound in thioester linkage to the sulfhydryl of the prosthetic group. As to expression, seed.

It localises to the plastid. The protein localises to the chloroplast. The protein operates within lipid metabolism; fatty acid biosynthesis. Functionally, carrier of the growing fatty acid chain in fatty acid biosynthesis. This Brassica napus (Rape) protein is Acyl carrier protein, chloroplastic (ACL1.A3).